The sequence spans 432 residues: Competence protein ComFA (432 aa).

Zn(2+) is bound by residues Cys-40, Cys-43, Cys-60, and Cys-63. Residues 107 to 257 (LQAVDKQKPT…RLGELKRLNL (151 aa)) form the Helicase ATP-binding domain. Residue 120–127 (AVTGAGKT) coordinates ATP. Residues 205 to 208 (DEVD) carry the DEAD box motif. The Helicase C-terminal domain occupies 289–432 (KLKSYIEKQR…IQMMNKEAGL (144 aa)).

The protein belongs to the DEAD box helicase family. Monomer and dimer in solution. Interacts with DprA and ComFC; ComFA-ComFC form rings about 150 Angstroms in diameter with apparent 6-fold symmetry. Zn(2+) is required as a cofactor.

The protein localises to the cytoplasm. Its function is as follows. Involved in transformation (genetic competence for DNA uptake). DNA uptake is energy dependent, this protein may provide the driving force for DNA uptake. Does not have helicase activity, translocates on single-stranded (ss)DNA in a 5'-3' direction in an ATP-dependent manner, but does not unwind double-stranded (ds)DNA (tested with 5'- and 3'-overhang dsDNA). ATP hydrolysis causes the release of ssDNA from ComFA. A ssDNA-stimulated ATPase; dsDNA does not stimulate ATPase. ATP hydrolysis causes the release of ssDNA from ComFA. ComFC has no effect on ATPase activity. Binds ssDNA but only very poorly to dsDNA in the absence of ATP. Binding to ssDNA does not require free DNA ends. The chain is Competence protein ComFA from Streptococcus pneumoniae (strain ATCC BAA-255 / R6).